The following is a 326-amino-acid chain: Metal-binding protein YtgA (326 aa).

The first 21 residues, 1–21, serve as a signal peptide directing secretion; it reads MSFFHTRKYKLILRGLLCLAG. Residues histidine 75, histidine 141, histidine 207, and aspartate 299 each contribute to the Fe(2+) site.

It belongs to the bacterial solute-binding protein 9 family. As to quaternary structure, monomer.

The protein localises to the periplasm. Functionally, part of the ATP-binding cassette (ABC) transport system YtgABCD involved in metal import. Binds Fe(2+), Mn(2+) and Ni(2+), with a preference for Fe(2+) and delivers them to the membrane permease for translocation into the cytoplasm. In Chlamydia trachomatis serovar D (strain ATCC VR-885 / DSM 19411 / UW-3/Cx), this protein is Metal-binding protein YtgA.